A 341-amino-acid polypeptide reads, in one-letter code: Probable UDP-glucuronate 4-epimerase (341 aa).

Tyrosine 152 acts as the Proton acceptor in catalysis.

Belongs to the NAD(P)-dependent epimerase/dehydratase family. It depends on NAD(+) as a cofactor.

It carries out the reaction UDP-alpha-D-glucuronate = UDP-alpha-D-galacturonate. This is Probable UDP-glucuronate 4-epimerase from Rhizobium meliloti (strain 1021) (Ensifer meliloti).